The sequence spans 90 residues: Chaplin-G (90 aa).

Positions 1 to 27 (MSRIAKAAGVALGTGAVVLSGTGMAMA) are cleaved as a signal peptide. Positions 38-78 (SPGVLSGNVVQVPVHVPVNLCGNTIDVIGLLNPAFGNACEN) constitute a Chaplin domain. Cys58 and Cys76 are joined by a disulfide.

This sequence belongs to the chaplin family. Short chaplin subfamily.

The protein localises to the cell surface. It is found in the secreted. The protein resides in the cell wall. Functionally, one of 8 partially redundant surface-active proteins required for efficient formation of aerial mycelium; the short chaplins assemble into a hydrophobic, amyloidal fibrillar surface layer that envelopes and protects aerial hyphae and spores, presumably anchored to the long chaplins. Chaplins have an overlapping function with the surface-active SapB peptide; chaplins are essential on minimal medium while on rich medium both chaplins and SapB are required for efficient aerial hyphae formation. Chaplins are also involved in cell attachment to a hydrophobic surface. Forms amyloid fibrils in vitro probably composed of stacked beta-sheets, at low extracellular concentrations individually restores the ability to form aerial hyphae to a chaplin-deficient strain. A small chaplin extract (ChpD, ChpE, ChpF, ChpG and ChpH) self-assembles into 2 different amyloids; small fibrils at the air-water interface form an amphipathic membrane that resembles spore-surface structures involved in aerial hyphae formation, and hydrophilic fibrils in solution that resemble the fibers that attach cells to a hydrophobic surface. At the air-water interface the hydrophilic surface is in contact with water (probably equivalent to the peptidoglycan layer), while the hydrophobic face is exposed to the air, making the surface of the aerial hyphae hydrophobic. A small chaplin extract applied to a chaplin-deficient strain restores aerial hyphae formation. The small chaplin extract forms an amyloid-like structure similar to that seen on the surface of cells without rodlets (rdlA-rdlB deletions), and is highly surface active, reducing surface tension from 72 to 26 mJ/m(2), which probably allows escape of hyphae from an aqueous environment into air. ChpF and ChpG are sufficient to restore the rodlet layer and hydrophobicity to a strain deleted for the other 6 chaplin genes. This is Chaplin-G from Streptomyces coelicolor (strain ATCC BAA-471 / A3(2) / M145).